Reading from the N-terminus, the 370-residue chain is Dual-specificity RNA methyltransferase RlmN (370 aa).

The active-site Proton acceptor is the glutamate 93. Positions 99-337 constitute a Radical SAM core domain; sequence EEGRGTLCVS…VTTVRKTRGD (239 aa). An intrachain disulfide couples cysteine 106 to cysteine 343. Positions 113, 117, and 120 each coordinate [4Fe-4S] cluster. Residues 167 to 168, serine 199, 221 to 223, and asparagine 300 each bind S-adenosyl-L-methionine; these read GE and SLH. Cysteine 343 (S-methylcysteine intermediate) is an active-site residue.

The protein belongs to the radical SAM superfamily. RlmN family. It depends on [4Fe-4S] cluster as a cofactor.

The protein localises to the cytoplasm. It carries out the reaction adenosine(2503) in 23S rRNA + 2 reduced [2Fe-2S]-[ferredoxin] + 2 S-adenosyl-L-methionine = 2-methyladenosine(2503) in 23S rRNA + 5'-deoxyadenosine + L-methionine + 2 oxidized [2Fe-2S]-[ferredoxin] + S-adenosyl-L-homocysteine. It catalyses the reaction adenosine(37) in tRNA + 2 reduced [2Fe-2S]-[ferredoxin] + 2 S-adenosyl-L-methionine = 2-methyladenosine(37) in tRNA + 5'-deoxyadenosine + L-methionine + 2 oxidized [2Fe-2S]-[ferredoxin] + S-adenosyl-L-homocysteine. Its function is as follows. Specifically methylates position 2 of adenine 2503 in 23S rRNA and position 2 of adenine 37 in tRNAs. m2A2503 modification seems to play a crucial role in the proofreading step occurring at the peptidyl transferase center and thus would serve to optimize ribosomal fidelity. In Francisella tularensis subsp. holarctica (strain FTNF002-00 / FTA), this protein is Dual-specificity RNA methyltransferase RlmN.